Consider the following 195-residue polypeptide: Imidazoleglycerol-phosphate dehydratase (195 aa).

The protein belongs to the imidazoleglycerol-phosphate dehydratase family.

Its subcellular location is the cytoplasm. It carries out the reaction D-erythro-1-(imidazol-4-yl)glycerol 3-phosphate = 3-(imidazol-4-yl)-2-oxopropyl phosphate + H2O. The protein operates within amino-acid biosynthesis; L-histidine biosynthesis; L-histidine from 5-phospho-alpha-D-ribose 1-diphosphate: step 6/9. The polypeptide is Imidazoleglycerol-phosphate dehydratase (Polynucleobacter necessarius subsp. necessarius (strain STIR1)).